The chain runs to 145 residues: Neutral phospholipase A2 paradoxin-like beta chain (145 aa).

The N-terminal stretch at 1–27 (MHPAHLLVLLAVCVSLLGASDIPPLPL) is a signal peptide. 7 cysteine pairs are disulfide-bonded: Cys38/Cys98, Cys54/Cys144, Cys56/Cys72, Cys71/Cys125, Cys78/Cys118, Cys87/Cys111, and Cys105/Cys116.

It belongs to the phospholipase A2 family. Group I subfamily. N49 sub-subfamily. As to quaternary structure, heterotrimer of alpha, beta, and gamma chains; non-covalently linked. As to expression, expressed by the venom gland.

The protein resides in the secreted. In terms of biological role, heterotrimer: Snake venom phospholipase A2 (PLA2) heterotrimer that acts as a potent presynaptic neurotoxin by blocking synaptic transmission and synaptic vesicle recycling. May act by binding in a calcium-dependent fashion to neurotonal pentraxin-1 (NPTX1) and neurotonal pentraxin-2 (NPTX2), but not to neuronal pentraxin receptor (NPTXR). Also binds to taipoxin-associated calcium binding protein 49 (RCN2), a protein localized in the lumen of endoplasmic reticulum. Its function is as follows. Monomer (beta chain): Snake venom phospholipase A2 homolog that is neither toxic nor enzymatically active. Does not bind calcium. This Oxyuranus microlepidotus (Inland taipan) protein is Neutral phospholipase A2 paradoxin-like beta chain.